We begin with the raw amino-acid sequence, 87 residues long: Small ribosomal subunit protein uS17 (87 aa).

The protein belongs to the universal ribosomal protein uS17 family. Part of the 30S ribosomal subunit.

Its function is as follows. One of the primary rRNA binding proteins, it binds specifically to the 5'-end of 16S ribosomal RNA. In Staphylococcus aureus (strain JH1), this protein is Small ribosomal subunit protein uS17.